Reading from the N-terminus, the 525-residue chain is Ribonuclease III domain-containing protein RNC1, chloroplastic (525 aa).

The N-terminal 28 residues, 1–28, are a transit peptide targeting the chloroplast; the sequence is MGPPAMAFQALTLTPLPFSLHSSSRRVR. 2 consecutive RNase III domains span residues 125–271 and 403–503; these read LLEA…LCFG and EHPR…CVYG.

In terms of assembly, interacts with RNA. Part of large ribonucleo-protein particles that contain CAF1 and/or CAF2.

The protein localises to the plastid. The protein resides in the chloroplast stroma. Functionally, binds specific group II introns in chloroplasts and facilitates their splicing. Acts on both subgroup IIA and subgroup IIB introns. The substrates of the subgroup II also require the CRM domain proteins CAF1 or CAF2. Binds both single-stranded and double-stranded RNA non-specifically, but lacks endonuclease activity. Required for plastid ribosome biogenesis. This is Ribonuclease III domain-containing protein RNC1, chloroplastic from Zea mays (Maize).